The primary structure comprises 39 residues: Photosystem II reaction center protein J (39 aa).

A helical membrane pass occupies residues 7–27 (IPLWLVATIGGIAVLTVLGLF).

Belongs to the PsbJ family. PSII is composed of 1 copy each of membrane proteins PsbA, PsbB, PsbC, PsbD, PsbE, PsbF, PsbH, PsbI, PsbJ, PsbK, PsbL, PsbM, PsbT, PsbX, PsbY, PsbZ, Psb30/Ycf12, at least 3 peripheral proteins of the oxygen-evolving complex and a large number of cofactors. It forms dimeric complexes.

The protein localises to the plastid. The protein resides in the chloroplast thylakoid membrane. Functionally, one of the components of the core complex of photosystem II (PSII). PSII is a light-driven water:plastoquinone oxidoreductase that uses light energy to abstract electrons from H(2)O, generating O(2) and a proton gradient subsequently used for ATP formation. It consists of a core antenna complex that captures photons, and an electron transfer chain that converts photonic excitation into a charge separation. This Cyanidioschyzon merolae (strain NIES-3377 / 10D) (Unicellular red alga) protein is Photosystem II reaction center protein J.